Reading from the N-terminus, the 352-residue chain is Glycerol-1-phosphate dehydrogenase [NAD(P)+] (352 aa).

NAD(+) is bound by residues G91–D95 and T113–S116. D118 is a substrate binding site. S122 is an NAD(+) binding site. E169 is a binding site for substrate. Zn(2+) is bound by residues E169 and H249. H253 contacts substrate. H269 contributes to the Zn(2+) binding site.

This sequence belongs to the glycerol-1-phosphate dehydrogenase family. In terms of assembly, homodimer. Zn(2+) serves as cofactor.

It localises to the cytoplasm. The enzyme catalyses sn-glycerol 1-phosphate + NAD(+) = dihydroxyacetone phosphate + NADH + H(+). It carries out the reaction sn-glycerol 1-phosphate + NADP(+) = dihydroxyacetone phosphate + NADPH + H(+). The protein operates within membrane lipid metabolism; glycerophospholipid metabolism. Catalyzes the NAD(P)H-dependent reduction of dihydroxyacetonephosphate (DHAP or glycerone phosphate) to glycerol 1-phosphate (G1P). The G1P thus generated is used as the glycerophosphate backbone of phospholipids in the cellular membranes of Archaea. The sequence is that of Glycerol-1-phosphate dehydrogenase [NAD(P)+] from Caldivirga maquilingensis (strain ATCC 700844 / DSM 13496 / JCM 10307 / IC-167).